A 176-amino-acid polypeptide reads, in one-letter code: dCTP deaminase (176 aa).

DCTP contacts are provided by residues 102–107 (RSTFAR) and D118. E128 (proton donor/acceptor) is an active-site residue. Residues Y160 and Q167 each contribute to the dCTP site.

Belongs to the dCTP deaminase family. Homotrimer.

The enzyme catalyses dCTP + H2O + H(+) = dUTP + NH4(+). Its pathway is pyrimidine metabolism; dUMP biosynthesis; dUMP from dCTP (dUTP route): step 1/2. Catalyzes the deamination of dCTP to dUTP. The polypeptide is dCTP deaminase (Hyperthermus butylicus (strain DSM 5456 / JCM 9403 / PLM1-5)).